A 505-amino-acid chain; its full sequence is Deoxyguanosinetriphosphate triphosphohydrolase (505 aa).

The region spanning 66 to 273 (RLTHSMEVQQ…MEAADDISYC (208 aa)) is the HD domain.

It belongs to the dGTPase family. Type 1 subfamily. As to quaternary structure, homotetramer. Mg(2+) is required as a cofactor.

It carries out the reaction dGTP + H2O = 2'-deoxyguanosine + triphosphate + H(+). In terms of biological role, dGTPase preferentially hydrolyzes dGTP over the other canonical NTPs. In Salmonella typhimurium (strain LT2 / SGSC1412 / ATCC 700720), this protein is Deoxyguanosinetriphosphate triphosphohydrolase.